The primary structure comprises 1193 residues: Structural maintenance of chromosomes protein 3 homolog (1193 aa).

Position 31–38 (31–38 (GFNGSGKS)) interacts with ATP. Residue Lys-101 is modified to N6-acetyllysine. Coiled coils occupy residues 179-286 (SKKV…LNKT) and 332-483 (ILRV…EIIK). One can recognise an SMC hinge domain in the interval 505–631 (ENILGFLIDN…VKSLESCENY (127 aa)). The stretch at 665–993 (TVYNKLKELK…SHKNIKDMIQ (329 aa)) forms a coiled coil.

Belongs to the SMC family. SMC3 subfamily. Component of the cohesin complex. Post-translationally, acetylation at Lys-101 by ESCO1 is important for genome stability and S phase sister chromatid cohesion.

It localises to the nucleus. Central component of cohesin, a complex required for chromosome cohesion during the cell cycle. The cohesin complex may form a large proteinaceous ring within which sister chromatids can be trapped. At anaphase, the complex is cleaved and dissociates from chromatin, allowing sister chromatids to segregate. Cohesion is coupled to DNA replication and is involved in DNA repair. The cohesin complex also plays an important role in spindle pole assembly during mitosis and in chromosomes movement. This chain is Structural maintenance of chromosomes protein 3 homolog, found in Plasmodium falciparum (isolate 3D7).